Here is a 94-residue protein sequence, read N- to C-terminus: Co-chaperonin GroES (94 aa).

It belongs to the GroES chaperonin family. As to quaternary structure, heptamer of 7 subunits arranged in a ring. Interacts with the chaperonin GroEL.

Its subcellular location is the cytoplasm. Its function is as follows. Together with the chaperonin GroEL, plays an essential role in assisting protein folding. The GroEL-GroES system forms a nano-cage that allows encapsulation of the non-native substrate proteins and provides a physical environment optimized to promote and accelerate protein folding. GroES binds to the apical surface of the GroEL ring, thereby capping the opening of the GroEL channel. The chain is Co-chaperonin GroES from Lactococcus lactis subsp. cremoris (strain MG1363).